A 233-amino-acid polypeptide reads, in one-letter code: Glucosamine-6-phosphate deaminase (233 aa).

The active-site Proton acceptor; for enolization step is Asp62. The For ring-opening step role is filled by Asn128. The Proton acceptor; for ring-opening step role is filled by His130. Glu135 (for ring-opening step) is an active-site residue.

The protein belongs to the glucosamine/galactosamine-6-phosphate isomerase family. NagB subfamily.

The enzyme catalyses alpha-D-glucosamine 6-phosphate + H2O = beta-D-fructose 6-phosphate + NH4(+). Its pathway is amino-sugar metabolism; N-acetylneuraminate degradation; D-fructose 6-phosphate from N-acetylneuraminate: step 5/5. Functionally, catalyzes the reversible isomerization-deamination of glucosamine 6-phosphate (GlcN6P) to form fructose 6-phosphate (Fru6P) and ammonium ion. This Enterococcus faecalis (strain ATCC 700802 / V583) protein is Glucosamine-6-phosphate deaminase.